A 542-amino-acid polypeptide reads, in one-letter code: Protein DETOXIFICATION 34 (542 aa).

The next 12 membrane-spanning stretches (helical) occupy residues 97-117, 127-147, 176-196, 204-224, 240-260, 272-292, 316-336, 344-364, 390-410, 435-455, 462-482, and 491-511; these read APIA…SIFV, AVAI…LGMA, ILLG…PLLI, IAEI…ALAI, IMAW…YLFI, AAFD…VVGW, FASA…IVLT, IAVG…MLFI, VIVT…VILI, LLGI…VAVG, VAYI…FLLG, and GIWI…LYMI.

Belongs to the multi antimicrobial extrusion (MATE) (TC 2.A.66.1) family.

Its subcellular location is the membrane. This chain is Protein DETOXIFICATION 34, found in Arabidopsis thaliana (Mouse-ear cress).